A 121-amino-acid polypeptide reads, in one-letter code: MARIAGVDIPKNERVEIGLTRIFGIGRSLSNKILKETGVEPNKRVKDLTDDEIVKIRSEIEKNYKVEGELRKEISMNIKRLMDIGCYRGLRHMANLPVRGQRTRTNSRTRKGPRRKIMKKK.

A disordered region spans residues 99-121 (RGQRTRTNSRTRKGPRRKIMKKK). A compositionally biased stretch (basic residues) spans 101 to 121 (QRTRTNSRTRKGPRRKIMKKK).

It belongs to the universal ribosomal protein uS13 family. Part of the 30S ribosomal subunit. Forms a loose heterodimer with protein S19. Forms two bridges to the 50S subunit in the 70S ribosome.

Located at the top of the head of the 30S subunit, it contacts several helices of the 16S rRNA. In the 70S ribosome it contacts the 23S rRNA (bridge B1a) and protein L5 of the 50S subunit (bridge B1b), connecting the 2 subunits; these bridges are implicated in subunit movement. Contacts the tRNAs in the A and P-sites. The polypeptide is Small ribosomal subunit protein uS13 (Thermodesulfovibrio yellowstonii (strain ATCC 51303 / DSM 11347 / YP87)).